The primary structure comprises 957 residues: Glycine dehydrogenase (decarboxylating) (957 aa).

Lys-708 carries the post-translational modification N6-(pyridoxal phosphate)lysine.

The protein belongs to the GcvP family. As to quaternary structure, the glycine cleavage system is composed of four proteins: P, T, L and H. Requires pyridoxal 5'-phosphate as cofactor.

It catalyses the reaction N(6)-[(R)-lipoyl]-L-lysyl-[glycine-cleavage complex H protein] + glycine + H(+) = N(6)-[(R)-S(8)-aminomethyldihydrolipoyl]-L-lysyl-[glycine-cleavage complex H protein] + CO2. In terms of biological role, the glycine cleavage system catalyzes the degradation of glycine. The P protein binds the alpha-amino group of glycine through its pyridoxal phosphate cofactor; CO(2) is released and the remaining methylamine moiety is then transferred to the lipoamide cofactor of the H protein. The sequence is that of Glycine dehydrogenase (decarboxylating) from Escherichia coli O157:H7.